Reading from the N-terminus, the 161-residue chain is Allophycocyanin alpha-B chain (161 aa).

N71 carries the post-translational modification N4-methylasparagine. Residue C81 participates in (2R,3E)-phycocyanobilin binding.

This sequence belongs to the phycobiliprotein family. Contains one covalently linked bilin chromophore.

The protein localises to the plastid. It is found in the chloroplast thylakoid membrane. Allophycocyanin is a photosynthetic bile pigment-protein complex with maximum absorption at approximately 650 nanometers. The protein is Allophycocyanin alpha-B chain (apcD) of Porphyra purpurea (Red seaweed).